The chain runs to 272 residues: Phosphoglycolate phosphatase 1 (272 aa).

The active-site Nucleophile is aspartate 19. Positions 19, 21, and 182 each coordinate Mg(2+).

It belongs to the HAD-like hydrolase superfamily. CbbY/CbbZ/Gph/YieH family. The cofactor is Mg(2+).

The enzyme catalyses 2-phosphoglycolate + H2O = glycolate + phosphate. The protein operates within organic acid metabolism; glycolate biosynthesis; glycolate from 2-phosphoglycolate: step 1/1. Its function is as follows. Specifically catalyzes the dephosphorylation of 2-phosphoglycolate. Is involved in the dissimilation of the intracellular 2-phosphoglycolate formed during the DNA repair of 3'-phosphoglycolate ends, a major class of DNA lesions induced by oxidative stress. This Pseudomonas aeruginosa (strain ATCC 15692 / DSM 22644 / CIP 104116 / JCM 14847 / LMG 12228 / 1C / PRS 101 / PAO1) protein is Phosphoglycolate phosphatase 1.